Consider the following 837-residue polypeptide: MLGVLKKVFDPNKRQLARLEKIADQVDALGPEMARLSDEQLRQKTEEFKARYQQGESLDDLLVEAFAVVREGAKRVLGLYPYKVQIMGGVVLHEGDIAEMKTGEGKTLTATMPVYLNALTGRGVHVVTVNEYLATRDATEMGKLYEFLGMTVGLNLSGMSREEKQAAYNADITYGTNNEFGFDYLRDNMVLYKEHIVQRPLYYAIIDEVDSILIDEARTPLIISGTAQKSTKLYVQANAFVRTLRKDVDYTYDEKTKSVQLTEEGINKAERAFGIDNLFDLKHVTLNHHIQLALRAHVTMQRDVDYVVQDGKVIIVDPFTGRLMHGRRYSDGLHQAIEAKEGLEIQNESMTLATITFQNYFRMYEKLAGMTGTAKTEEEEFRNIYNMRVVVIPTNRPVIREDRPDLIYRTMEGKFRAVVEDIAARHAKGQPVLVGTVAIETSEMLSEMLKKRGIPHNVLNAKNHAKEAEIIAQAGQKGAVTIATNMAGRGTDIKLGEGVKELGGLAVIGTERHESRRIDNQLRGRSGRQGDPGVSQFYLSLEDELMRRFGSESLMAMMDRLGMDDSQPIQSKMVTRAVESAQKRVEGNNFDARKQLLQYDDVLREQREIIYRQRYEVLDSDNLRGIIEKMIHSVIERVVNAHTPKEEVPEEWNLKGLVEYLNAHLLPEGDVTEADLRGKEPEEMIELIWAKVKARYDEKEAQIPPEQMREFERVVVLRAVDMKWMHHIDAMEQLRQGIHLRAYGQVDPLREYQMEGYAMFEEMIAAIEEEVATYIMKAEIHHNLERQEVAKGEAVHPKEDGEEPKRKPVRKAVRVGRNDPCPCGSGKKYKHCCGRTV.

ATP contacts are provided by residues glutamine 85, glycine 103 to threonine 107, and aspartate 492. A compositionally biased stretch (basic and acidic residues) spans glutamine 787–arginine 806. Residues glutamine 787 to lysine 811 form a disordered region. Zn(2+)-binding residues include cysteine 821, cysteine 823, cysteine 832, and cysteine 833.

This sequence belongs to the SecA family. As to quaternary structure, monomer and homodimer. Part of the essential Sec protein translocation apparatus which comprises SecA, SecYEG and auxiliary proteins SecDF. Other proteins may also be involved. Zn(2+) serves as cofactor.

It is found in the cell membrane. It localises to the cytoplasm. It catalyses the reaction ATP + H2O + cellular proteinSide 1 = ADP + phosphate + cellular proteinSide 2.. Part of the Sec protein translocase complex. Interacts with the SecYEG preprotein conducting channel. Has a central role in coupling the hydrolysis of ATP to the transfer of proteins into and across the cell membrane, serving as an ATP-driven molecular motor driving the stepwise translocation of polypeptide chains across the membrane. This is Protein translocase subunit SecA 1 from Geobacillus kaustophilus (strain HTA426).